Here is a 613-residue protein sequence, read N- to C-terminus: Xaa-Pro aminopeptidase ApepP (613 aa).

Positions 77 and 388 each coordinate substrate. Mn(2+)-binding residues include D408, D419, and H482. Residues H482, H491, and E517 each contribute to the substrate site. Residues E517 and E531 each coordinate Mn(2+).

Belongs to the peptidase M24B family. Mn(2+) serves as cofactor. As to expression, detected in gut, brain, testes and ovary.

The protein localises to the cytoplasm. It catalyses the reaction Release of any N-terminal amino acid, including proline, that is linked to proline, even from a dipeptide or tripeptide.. With respect to regulation, inhibited by the chelating agent EDTA. Divalent metal ions have substrate- and concentration-dependent effects on activity. Activity towards bradykinin is inhibited with increasing Mn(2+) concentration. Activity towards substance P is stimulated by low Mn(2+) concentrations (in the range 10 uM-1 mM) but inhibited by Mn(2+) concentrations in excess of 1 mM. Ca(2+), Mg(2+) and Co(2+) stimulate activity towards substance P at concentrations of 10-100 uM but are inhibitory at concentrations of 1 mM. Zn(2+), Ni(2+) and Cu(2+) strongly inhibit activity towards substance P at concentrations of 1 mM. In terms of biological role, catalyzes the removal of a penultimate prolyl residue from the N-termini of peptides, such as Arg-Pro-Pro. The protein is Xaa-Pro aminopeptidase ApepP of Drosophila melanogaster (Fruit fly).